The chain runs to 181 residues: ATP synthase subunit delta (181 aa).

It belongs to the ATPase delta chain family. F-type ATPases have 2 components, F(1) - the catalytic core - and F(0) - the membrane proton channel. F(1) has five subunits: alpha(3), beta(3), gamma(1), delta(1), epsilon(1). F(0) has three main subunits: a(1), b(2) and c(10-14). The alpha and beta chains form an alternating ring which encloses part of the gamma chain. F(1) is attached to F(0) by a central stalk formed by the gamma and epsilon chains, while a peripheral stalk is formed by the delta and b chains.

It localises to the cell inner membrane. F(1)F(0) ATP synthase produces ATP from ADP in the presence of a proton or sodium gradient. F-type ATPases consist of two structural domains, F(1) containing the extramembraneous catalytic core and F(0) containing the membrane proton channel, linked together by a central stalk and a peripheral stalk. During catalysis, ATP synthesis in the catalytic domain of F(1) is coupled via a rotary mechanism of the central stalk subunits to proton translocation. Functionally, this protein is part of the stalk that links CF(0) to CF(1). It either transmits conformational changes from CF(0) to CF(1) or is implicated in proton conduction. The sequence is that of ATP synthase subunit delta from Mannheimia succiniciproducens (strain KCTC 0769BP / MBEL55E).